Here is a 257-residue protein sequence, read N- to C-terminus: UPF0246 protein AHA_3667 (257 aa).

It belongs to the UPF0246 family.

In Aeromonas hydrophila subsp. hydrophila (strain ATCC 7966 / DSM 30187 / BCRC 13018 / CCUG 14551 / JCM 1027 / KCTC 2358 / NCIMB 9240 / NCTC 8049), this protein is UPF0246 protein AHA_3667.